The sequence spans 126 residues: Small ribosomal subunit protein uS13 (126 aa).

The interval 92-126 (HRRGLPVRGQRTKTNARTRKGPKKTVAGKKKATRK) is disordered.

The protein belongs to the universal ribosomal protein uS13 family. Part of the 30S ribosomal subunit. Forms a loose heterodimer with protein S19. Forms two bridges to the 50S subunit in the 70S ribosome.

Its function is as follows. Located at the top of the head of the 30S subunit, it contacts several helices of the 16S rRNA. In the 70S ribosome it contacts the 23S rRNA (bridge B1a) and protein L5 of the 50S subunit (bridge B1b), connecting the 2 subunits; these bridges are implicated in subunit movement. Contacts the tRNAs in the A and P-sites. The sequence is that of Small ribosomal subunit protein uS13 from Deinococcus deserti (strain DSM 17065 / CIP 109153 / LMG 22923 / VCD115).